The chain runs to 774 residues: 5-methyltetrahydropteroyltriglutamate--homocysteine methyltransferase (774 aa).

5-methyltetrahydropteroyltri-L-glutamate-binding positions include 23-26 and Lys123; that span reads RELK. L-homocysteine is bound by residues 446–448 and Glu499; that span reads IGS. L-methionine is bound by residues 446 to 448 and Glu499; that span reads IGS. Residues 530 to 531 and Trp576 contribute to the 5-methyltetrahydropteroyltri-L-glutamate site; that span reads RC. Asp614 provides a ligand contact to L-homocysteine. Asp614 is an L-methionine binding site. Glu620 is a 5-methyltetrahydropteroyltri-L-glutamate binding site. Positions 656, 658, and 680 each coordinate Zn(2+). His709 acts as the Proton donor in catalysis. Zn(2+) is bound at residue Cys741.

The protein belongs to the vitamin-B12 independent methionine synthase family. Zn(2+) is required as a cofactor.

The enzyme catalyses 5-methyltetrahydropteroyltri-L-glutamate + L-homocysteine = tetrahydropteroyltri-L-glutamate + L-methionine. It participates in amino-acid biosynthesis; L-methionine biosynthesis via de novo pathway; L-methionine from L-homocysteine (MetE route): step 1/1. Catalyzes the transfer of a methyl group from 5-methyltetrahydrofolate to homocysteine resulting in methionine formation. This is 5-methyltetrahydropteroyltriglutamate--homocysteine methyltransferase from Aliivibrio fischeri (strain ATCC 700601 / ES114) (Vibrio fischeri).